The following is an 804-amino-acid chain: DNA mismatch repair protein MutS (804 aa).

ATP is bound at residue glycine 614 to serine 621.

It belongs to the DNA mismatch repair MutS family.

Functionally, this protein is involved in the repair of mismatches in DNA. It is possible that it carries out the mismatch recognition step. This protein has a weak ATPase activity. The sequence is that of DNA mismatch repair protein MutS from Ehrlichia ruminantium (strain Gardel).